Consider the following 175-residue polypeptide: MVLQQSDLLILGVVIGTHGLRGDLKIRGSDQDFPLLSKMHQLVFLREGETVLKCARRKAGWYKGHLLLQIAGYRDVRAVQHLVGCEVAVRRDDVPGLPAGEYYWFQLKGMTAVDRRLGALGCLEDIFTTAAHDIYVINGDYGEVLVPAVKAFIADVDLESNRILFDLPDGLVQET.

A PRC barrel domain is found at 99 to 171; sequence AGEYYWFQLK…RILFDLPDGL (73 aa).

This sequence belongs to the RimM family. As to quaternary structure, binds ribosomal protein uS19.

The protein resides in the cytoplasm. Its function is as follows. An accessory protein needed during the final step in the assembly of 30S ribosomal subunit, possibly for assembly of the head region. Essential for efficient processing of 16S rRNA. May be needed both before and after RbfA during the maturation of 16S rRNA. It has affinity for free ribosomal 30S subunits but not for 70S ribosomes. This chain is Ribosome maturation factor RimM, found in Syntrophotalea carbinolica (strain DSM 2380 / NBRC 103641 / GraBd1) (Pelobacter carbinolicus).